A 186-amino-acid chain; its full sequence is Ribosome-recycling factor (186 aa).

It belongs to the RRF family.

It is found in the cytoplasm. In terms of biological role, responsible for the release of ribosomes from messenger RNA at the termination of protein biosynthesis. May increase the efficiency of translation by recycling ribosomes from one round of translation to another. The chain is Ribosome-recycling factor from Bacteroides fragilis (strain ATCC 25285 / DSM 2151 / CCUG 4856 / JCM 11019 / LMG 10263 / NCTC 9343 / Onslow / VPI 2553 / EN-2).